A 272-amino-acid chain; its full sequence is MKLDTSGLESTAPIFRRSDFVFDGLQMTPSFDLPNPTDFDGFQKEAVQMVKPAKGTTTLAFIFKHGVMVAADSRASMGGYISSQSVKKIIEINPYMLGTMAGGAADCQFWHRNLGIKCRLHELANKRRISVTGASKLLANILYNYRGMGLSVGTMIAGWDETGPGLYYVDSEGGRLKGMRFSVGSGSPYAYGVLDNGYKYDMTVEEASELARRAIYHATYRDGASGGVVSVYHVGPDGWKKVTGDDVGDLHFQYYPVVPATVEQEMVEVVGA.

The propeptide at 1 to 55 is removed in mature form; that stretch reads MKLDTSGLESTAPIFRRSDFVFDGLQMTPSFDLPNPTDFDGFQKEAVQMVKPAKG. T56 (nucleophile) is an active-site residue.

This sequence belongs to the peptidase T1B family. As to quaternary structure, the 26S proteasome consists of a 20S proteasome core and two 19S regulatory subunits. The 20S proteasome core is composed of 28 subunits that are arranged in four stacked rings, resulting in a barrel-shaped structure. The two end rings are each formed by seven alpha subunits, and the two central rings are each formed by seven beta subunits. The catalytic chamber with the active sites is on the inside of the barrel.

The protein localises to the cytoplasm. Its subcellular location is the nucleus. The catalysed reaction is Cleavage of peptide bonds with very broad specificity.. The proteasome is a multicatalytic proteinase complex which is characterized by its ability to cleave peptides with Arg, Phe, Tyr, Leu, and Glu adjacent to the leaving group at neutral or slightly basic pH. The proteasome has an ATP-dependent proteolytic activity. The chain is Proteasome subunit beta type-5 from Spinacia oleracea (Spinach).